A 1167-amino-acid chain; its full sequence is DNA-directed RNA polymerase subunit beta (1167 aa).

The protein belongs to the RNA polymerase beta chain family. The RNAP catalytic core consists of 2 alpha, 1 beta, 1 beta' and 1 omega subunit. When a sigma factor is associated with the core the holoenzyme is formed, which can initiate transcription.

It carries out the reaction RNA(n) + a ribonucleoside 5'-triphosphate = RNA(n+1) + diphosphate. Functionally, DNA-dependent RNA polymerase catalyzes the transcription of DNA into RNA using the four ribonucleoside triphosphates as substrates. The sequence is that of DNA-directed RNA polymerase subunit beta from Treponema denticola (strain ATCC 35405 / DSM 14222 / CIP 103919 / JCM 8153 / KCTC 15104).